The sequence spans 295 residues: Large ribosomal subunit protein uL18 (295 aa).

Residues 251-261 (PTPKKKTDFAG) show a composition bias toward basic and acidic residues. Positions 251 to 295 (PTPKKKTDFAGKTKRWNRKKMTFSQRRDRVKQKKASFLRAKQQEG) are disordered. The segment covering 262-271 (KTKRWNRKKM) has biased composition (basic residues).

This sequence belongs to the universal ribosomal protein uL18 family. Component of the large ribosomal subunit (LSU).

Its subcellular location is the cytoplasm. It is found in the nucleus. In terms of biological role, component of the ribosome, a large ribonucleoprotein complex responsible for the synthesis of proteins in the cell. The small ribosomal subunit (SSU) binds messenger RNAs (mRNAs) and translates the encoded message by selecting cognate aminoacyl-transfer RNA (tRNA) molecules. The large subunit (LSU) contains the ribosomal catalytic site termed the peptidyl transferase center (PTC), which catalyzes the formation of peptide bonds, thereby polymerizing the amino acids delivered by tRNAs into a polypeptide chain. The nascent polypeptides leave the ribosome through a tunnel in the LSU and interact with protein factors that function in enzymatic processing, targeting, and the membrane insertion of nascent chains at the exit of the ribosomal tunnel. The protein is Large ribosomal subunit protein uL18 (RPL5) of Styela clava (Sea squirt).